Consider the following 98-residue polypeptide: Mu-type opioid receptor (98 aa).

Over tyrosine 1 to asparagine 9 the chain is Cytoplasmic. A helical membrane pass occupies residues isoleucine 10–leucine 34. Topologically, residues methionine 35 to cysteine 45 are extracellular. The chain crosses the membrane as a helical span at residues lysine 46–valine 68. The Cytoplasmic segment spans residues aspartate 69–asparagine 88. At tyrosine 71 the chain carries Phosphotyrosine. The helical transmembrane segment at alanine 89 to isoleucine 98 threads the bilayer.

Belongs to the G-protein coupled receptor 1 family. Forms homooligomers and heterooligomers with other GPCRs, such as OPRD1, OPRK1, OPRL1, NPFFR2, ADRA2A, SSTR2, CNR1 and CCR5 (probably in dimeric forms). Interacts with heterotrimeric G proteins; interaction with a heterotrimeric complex containing GNAI1, GNB1 and GNG2 stabilizes the active conformation of the receptor and increases its affinity for endomorphin-2, the synthetic opioid peptide DAMGO and for morphinan agonists. Interacts with PPL; the interaction disrupts agonist-mediated G-protein activation. Interacts (via C-terminus) with DNAJB4 (via C-terminus). Interacts with calmodulin; the interaction inhibits the constitutive activity of OPRM1; it abolishes basal and attenuates agonist-stimulated G-protein coupling. Interacts with FLNA, PLD2, RANBP9 and WLS and GPM6A. Interacts with RTP4. Interacts with SYP and GNAS. Interacts with RGS9, RGS17, RGS20, RGS4, PPP1R9B and HINT1. Phosphorylated. Differentially phosphorylated in basal and agonist-induced conditions. Agonist-mediated phosphorylation modulates receptor internalization. Phosphorylated by GRK2 in a agonist-dependent manner. Phosphorylated on tyrosine residues; the phosphorylation is involved in agonist-induced G-protein-independent receptor down-regulation. In terms of processing, phosphorylated. Differentially phosphorylated in basal and agonist-induced conditions. Agonist-mediated phosphorylation modulates receptor internalization. Phosphorylated by GRK2 in a agonist-dependent manner. Phosphorylated on tyrosine residues; the phosphorylation is involved in agonist-induced G-protein-independent receptor down-regulation. Post-translationally, ubiquitinated. A basal ubiquitination seems not to be related to degradation. Ubiquitination is increased upon formation of OPRM1:OPRD1 oligomers leading to proteasomal degradation; the ubiquitination is diminished by RTP4.

It localises to the cell membrane. The protein localises to the cell projection. The protein resides in the axon. It is found in the perikaryon. Its subcellular location is the dendrite. It localises to the endosome. Its function is as follows. Receptor for endogenous opioids such as beta-endorphin and endomorphin. Receptor for natural and synthetic opioids including morphine, heroin, DAMGO, fentanyl, etorphine, buprenorphin and methadone. Also activated by enkephalin peptides, such as Met-enkephalin or Met-enkephalin-Arg-Phe, with higher affinity for Met-enkephalin-Arg-Phe. Agonist binding to the receptor induces coupling to an inactive GDP-bound heterotrimeric G-protein complex and subsequent exchange of GDP for GTP in the G-protein alpha subunit leading to dissociation of the G-protein complex with the free GTP-bound G-protein alpha and the G-protein beta-gamma dimer activating downstream cellular effectors. The agonist- and cell type-specific activity is predominantly coupled to pertussis toxin-sensitive G(i) and G(o) G alpha proteins, GNAI1, GNAI2, GNAI3 and GNAO1, and to a lesser extent to pertussis toxin-insensitive G alpha proteins GNAZ and GNA15. They mediate an array of downstream cellular responses, including inhibition of adenylate cyclase activity and both N-type and L-type calcium channels, activation of inward rectifying potassium channels, mitogen-activated protein kinase (MAPK), phospholipase C (PLC), phosphoinositide/protein kinase (PKC), phosphoinositide 3-kinase (PI3K) and regulation of NF-kappa-B. Also couples to adenylate cyclase stimulatory G alpha proteins. The selective temporal coupling to G-proteins and subsequent signaling can be regulated by RGSZ proteins, such as RGS9, RGS17 and RGS4. Phosphorylation by members of the GPRK subfamily of Ser/Thr protein kinases and association with beta-arrestins is involved in short-term receptor desensitization. Beta-arrestins associate with the GPRK-phosphorylated receptor and uncouple it from the G-protein thus terminating signal transduction. The phosphorylated receptor is internalized through endocytosis via clathrin-coated pits which involves beta-arrestins. The activation of the ERK pathway occurs either in a G-protein-dependent or a beta-arrestin-dependent manner and is regulated by agonist-specific receptor phosphorylation. Acts as a class A G-protein coupled receptor (GPCR) which dissociates from beta-arrestin at or near the plasma membrane and undergoes rapid recycling. Receptor down-regulation pathways are varying with the agonist and occur dependent or independent of G-protein coupling. Endogenous ligands induce rapid desensitization, endocytosis and recycling. Heterooligomerization with other GPCRs can modulate agonist binding, signaling and trafficking properties. Involved in neurogenesis. The protein is Mu-type opioid receptor (OPRM1) of Cavia porcellus (Guinea pig).